The sequence spans 521 residues: Signal recognition particle protein (521 aa).

GTP-binding positions include 107–114 (GLQGSGKT), 196–200 (DTAGR), and 254–257 (TKLD). The segment at 436–505 (GGMGIPGMGR…MPDGLNELPP (70 aa)) is disordered. Over residues 447 to 462 (SATRKSKGGKGKKRAR) the composition is skewed to basic residues.

It belongs to the GTP-binding SRP family. SRP54 subfamily. As to quaternary structure, part of the signal recognition particle protein translocation system, which is composed of SRP and FtsY.

Its subcellular location is the cytoplasm. It carries out the reaction GTP + H2O = GDP + phosphate + H(+). Functionally, involved in targeting and insertion of nascent membrane proteins into the cytoplasmic membrane. Binds to the hydrophobic signal sequence of the ribosome-nascent chain (RNC) as it emerges from the ribosomes. The SRP-RNC complex is then targeted to the cytoplasmic membrane where it interacts with the SRP receptor FtsY. The polypeptide is Signal recognition particle protein (Mycobacterium leprae (strain TN)).